An 80-amino-acid chain; its full sequence is Large ribosomal subunit protein bL31 (80 aa).

Cys16, Cys18, Cys38, and Cys41 together coordinate Zn(2+).

This sequence belongs to the bacterial ribosomal protein bL31 family. Type A subfamily. In terms of assembly, part of the 50S ribosomal subunit. Zn(2+) serves as cofactor.

Binds the 23S rRNA. This is Large ribosomal subunit protein bL31 from Mycobacterium bovis (strain ATCC BAA-935 / AF2122/97).